The chain runs to 302 residues: D-alanine--D-alanine ligase (302 aa).

In terms of domain architecture, ATP-grasp spans K104–E296. A130 to T183 contacts ATP. Positions 251, 263, and 265 each coordinate Mg(2+).

It belongs to the D-alanine--D-alanine ligase family. Mg(2+) serves as cofactor. Mn(2+) is required as a cofactor.

It is found in the cytoplasm. The catalysed reaction is 2 D-alanine + ATP = D-alanyl-D-alanine + ADP + phosphate + H(+). Its pathway is cell wall biogenesis; peptidoglycan biosynthesis. In terms of biological role, cell wall formation. This chain is D-alanine--D-alanine ligase, found in Rhodospirillum rubrum (strain ATCC 11170 / ATH 1.1.1 / DSM 467 / LMG 4362 / NCIMB 8255 / S1).